The primary structure comprises 384 residues: Urea transporter 1 (384 aa).

5 helical membrane-spanning segments follow: residues 61–81 (ISQV…AGLL), 85–105 (PWWA…ALLL), 111–131 (AIAA…MAVF), 138–158 (FWWL…FSSA), and 168–188 (LPVF…ATGH). N206 carries N-linked (GlcNAc...) asparagine glycosylation. 4 helical membrane-spanning segments follow: residues 250–270 (LMCL…LSLA), 279–299 (GLWG…FMAL), 305–325 (LLAL…THLM), and 327–347 (AVHL…FLLL).

It belongs to the urea transporter family. In terms of assembly, homotrimer; each subunit contains a pore through which urea permeates. Identified in a complex with STOM. In terms of tissue distribution, expressed in brain, spleen, kidney, testis and lung, with highest levels in brain.

Its subcellular location is the cell membrane. The protein localises to the basolateral cell membrane. It carries out the reaction urea(in) = urea(out). In terms of biological role, mediates the transport of urea driven by a concentration gradient across the cell membrane. Mediates the transport of urea across the cell membranes of erythrocytes and the renal inner medullary collecting duct which is critical to the urinary concentrating mechanism. Facilitates water transport in erythrocytes. This chain is Urea transporter 1 (Slc14a1), found in Rattus norvegicus (Rat).